Here is an 81-residue protein sequence, read N- to C-terminus: ATP synthase subunit c (81 aa).

2 helical membrane passes run 6-26 (AAAS…GPGI) and 57-77 (LAFM…LLFA).

The protein belongs to the ATPase C chain family. As to quaternary structure, F-type ATPases have 2 components, F(1) - the catalytic core - and F(0) - the membrane proton channel. F(1) has five subunits: alpha(3), beta(3), gamma(1), delta(1), epsilon(1). F(0) has four main subunits: a(1), b(1), b'(1) and c(10-14). The alpha and beta chains form an alternating ring which encloses part of the gamma chain. F(1) is attached to F(0) by a central stalk formed by the gamma and epsilon chains, while a peripheral stalk is formed by the delta, b and b' chains.

The protein resides in the cellular thylakoid membrane. In terms of biological role, f(1)F(0) ATP synthase produces ATP from ADP in the presence of a proton or sodium gradient. F-type ATPases consist of two structural domains, F(1) containing the extramembraneous catalytic core and F(0) containing the membrane proton channel, linked together by a central stalk and a peripheral stalk. During catalysis, ATP synthesis in the catalytic domain of F(1) is coupled via a rotary mechanism of the central stalk subunits to proton translocation. Key component of the F(0) channel; it plays a direct role in translocation across the membrane. A homomeric c-ring of between 10-14 subunits forms the central stalk rotor element with the F(1) delta and epsilon subunits. This Picosynechococcus sp. (strain ATCC 27264 / PCC 7002 / PR-6) (Agmenellum quadruplicatum) protein is ATP synthase subunit c.